The sequence spans 152 residues: Large ribosomal subunit protein bL9 (152 aa).

This sequence belongs to the bacterial ribosomal protein bL9 family.

Its function is as follows. Binds to the 23S rRNA. This is Large ribosomal subunit protein bL9 from Mycobacterium ulcerans (strain Agy99).